Reading from the N-terminus, the 220-residue chain is Adenylate kinase (220 aa).

10-15 lines the ATP pocket; the sequence is GAGKGT. Residues 30-59 are NMP; the sequence is STGDLFRANISQQTELGKLAKSYMDEGNLV. Residues Thr31, Arg36, 57–59, 85–88, and Gln92 contribute to the AMP site; these read NLV and GFPR. The LID stretch occupies residues 126 to 164; it reads GRRICRNDSAHVFHVSYKPPKQEGVCDVCGGELYQRDDD. ATP-binding positions include Arg127 and 137 to 138; that span reads VF. Residues Arg161 and Arg172 each coordinate AMP. Gly200 lines the ATP pocket.

The protein belongs to the adenylate kinase family. Monomer.

The protein resides in the cytoplasm. It catalyses the reaction AMP + ATP = 2 ADP. Its pathway is purine metabolism; AMP biosynthesis via salvage pathway; AMP from ADP: step 1/1. Functionally, catalyzes the reversible transfer of the terminal phosphate group between ATP and AMP. Plays an important role in cellular energy homeostasis and in adenine nucleotide metabolism. The sequence is that of Adenylate kinase from Streptomyces avermitilis (strain ATCC 31267 / DSM 46492 / JCM 5070 / NBRC 14893 / NCIMB 12804 / NRRL 8165 / MA-4680).